Reading from the N-terminus, the 2206-residue chain is Genome polyprotein (2206 aa).

Gly-2 carries the N-myristoyl glycine; by host lipid modification. The Cytoplasmic portion of the chain corresponds to 2–1517 (GAQVSSQKVG…NINRAMTILQ (1516 aa)). Amphipathic alpha-helix regions lie at residues 579–599 (GIED…LPKQ) and 579–603 (GIED…QDSL). Active-site for protease 2A activity residues include His-898 and Asp-916. Residues Cys-933 and Cys-935 each contribute to the Zn(2+) site. Catalysis depends on Cys-987, which acts as the For protease 2A activity. Zn(2+) contacts are provided by Cys-993 and His-995. Positions 1125-1197 (GDSWLKKFTE…HQSCPSQEHQ (73 aa)) are membrane-binding. Residues 1125–1263 (GDSWLKKFTE…SPGTGKSVAT (139 aa)) are oligomerization. An RNA-binding region spans residues 1146-1150 (SNKIS). The 157-residue stretch at 1229–1385 (EHTINNYIQF…GEYSRDGKLN (157 aa)) folds into the SF3 helicase domain. 1253-1260 (GSPGTGKS) contacts ATP. Zn(2+) is bound by residues Cys-1393, Cys-1396, Cys-1405, and Cys-1410. The segment at 1393–1410 (CKDCHQPANFKRCCPLVC) adopts a C4-type zinc-finger fold. The tract at residues 1437–1444 (ERNRRSNI) is RNA-binding. Residues 1448-1453 (MEALFQ) form an oligomerization region. An intramembrane segment occupies 1518–1533 (AVTTFAAVAGVVYVMY). The Cytoplasmic portion of the chain corresponds to 1534-2206 (KLFAGHQGAY…TLYRRWLDSF (673 aa)). Tyr-1543 is subject to O-(5'-phospho-RNA)-tyrosine. A Peptidase C3 domain is found at 1563–1741 (GPGFDYAVAM…FAAALKRSYF (179 aa)). Catalysis depends on for protease 3C activity residues His-1602, Glu-1633, and Cys-1709. The RdRp catalytic domain maps to 1972–2087 (EKLFAFDYTG…SYPHEVDASL (116 aa)). Positions 1978 and 2073 each coordinate Mg(2+).

This sequence belongs to the picornaviruses polyprotein family. In terms of assembly, interacts with capsid protein VP1 and capsid protein VP3 to form heterotrimeric protomers. Interacts with capsid protein VP0, and capsid protein VP3 to form heterotrimeric protomers. Interacts with human PVR. Five protomers subsequently associate to form pentamers which serve as building blocks for the capsid. Interacts with capsid protein VP2, capsid protein VP3 and capsid protein VP4 following cleavage of capsid protein VP0. As to quaternary structure, interacts with capsid protein VP1 and capsid protein VP3 in the mature capsid. In terms of assembly, interacts with capsid protein VP0 and capsid protein VP1 to form heterotrimeric protomers. Five protomers subsequently associate to form pentamers which serve as building blocks for the capsid. Interacts with capsid protein VP4 in the mature capsid. Interacts with protein 2C; this interaction may be important for virion morphogenesis. Interacts with capsid protein VP1 and capsid protein VP3. As to quaternary structure, homodimer. In terms of assembly, homohexamer; forms a hexameric ring structure with 6-fold symmetry characteristic of AAA+ ATPases. Interacts (via N-terminus) with host RTN3 (via reticulon domain); this interaction is important for viral replication. Interacts with capsid protein VP3; this interaction may be important for virion morphogenesis. Interacts with protein 3CD. As to quaternary structure, homodimer. Interacts with host GBF1. Interacts (via GOLD domain) with host ACBD3 (via GOLD domain); this interaction allows the formation of a viral protein 3A/ACBD3 heterotetramer with a 2:2 stoichiometry, which will stimulate the recruitment of host PI4KB in order to synthesize PI4P at the viral RNA replication sites. In terms of assembly, interacts with RNA-directed RNA polymerase. Interacts with protein 3AB and with RNA-directed RNA polymerase. As to quaternary structure, interacts with Viral protein genome-linked and with protein 3CD. Requires Mg(2+) as cofactor. Post-translationally, specific enzymatic cleavages in vivo by the viral proteases yield processing intermediates and the mature proteins. Myristoylation is required for the formation of pentamers during virus assembly. Further assembly of 12 pentamers and a molecule of genomic RNA generates the provirion. In terms of processing, during virion maturation, immature virions are rendered infectious following cleavage of VP0 into VP4 and VP2. This maturation seems to be an autocatalytic event triggered by the presence of RNA in the capsid and it is followed by a conformational change infectious virion. Post-translationally, myristoylation is required during RNA encapsidation and formation of the mature virus particle. VPg is uridylylated by the polymerase into VPg-pUpU. This acts as a nucleotide-peptide primer for the genomic RNA replication.

Its subcellular location is the virion. The protein localises to the host cytoplasm. It is found in the host cytoplasmic vesicle membrane. It localises to the host nucleus. The catalysed reaction is a ribonucleoside 5'-triphosphate + H2O = a ribonucleoside 5'-diphosphate + phosphate + H(+). It carries out the reaction Selective cleavage of Tyr-|-Gly bond in the picornavirus polyprotein.. The enzyme catalyses RNA(n) + a ribonucleoside 5'-triphosphate = RNA(n+1) + diphosphate. It catalyses the reaction Selective cleavage of Gln-|-Gly bond in the poliovirus polyprotein. In other picornavirus reactions Glu may be substituted for Gln, and Ser or Thr for Gly.. Replication or transcription is subject to high level of random mutations by the nucleotide analog ribavirin. In terms of biological role, forms an icosahedral capsid of pseudo T=3 symmetry with capsid proteins VP2 and VP3. The capsid is 300 Angstroms in diameter, composed of 60 copies of each capsid protein and enclosing the viral positive strand RNA genome. Capsid protein VP1 mainly forms the vertices of the capsid. Capsid protein VP1 interacts with host cell receptor PVR to provide virion attachment to target host cells. This attachment induces virion internalization predominantly through clathrin- and caveolin-independent endocytosis in Hela cells and through caveolin-mediated endocytosis in brain microvascular endothelial cells. Tyrosine kinases are probably involved in the entry process. Virus binding to PVR induces increased junctional permeability and rearrangement of junctional proteins. Modulation of endothelial tight junctions, as well as cytolytic infection of endothelial cells themselves, may result in loss of endothelial integrity which may help the virus to reach the CNS. After binding to its receptor, the capsid undergoes conformational changes. Capsid protein VP1 N-terminus (that contains an amphipathic alpha-helix) and capsid protein VP4 are externalized. Together, they shape a pore in the host membrane through which viral genome is translocated to host cell cytoplasm. Functionally, forms an icosahedral capsid of pseudo T=3 symmetry with capsid proteins VP2 and VP3. The capsid is 300 Angstroms in diameter, composed of 60 copies of each capsid protein and enclosing the viral positive strand RNA genome. Lies on the inner surface of the capsid shell. After binding to the host receptor, the capsid undergoes conformational changes. Capsid protein VP4 is released, Capsid protein VP1 N-terminus is externalized, and together, they shape a pore in the host membrane through which the viral genome is translocated into the host cell cytoplasm. Its function is as follows. Component of immature procapsids, which is cleaved into capsid proteins VP4 and VP2 after maturation. Allows the capsid to remain inactive before the maturation step. In terms of biological role, cysteine protease that cleaves viral polyprotein and specific host proteins. It is responsible for the autocatalytic cleavage between the P1 and P2 regions, which is the first cleavage occurring in the polyprotein. Also cleaves the host translation initiation factor EIF4G1, in order to shut down the capped cellular mRNA translation. Inhibits the host nucleus-cytoplasm protein and RNA trafficking by cleaving host members of the nuclear pores including NUP98, NUP62 and NUP153. Counteracts stress granule formation probably by antagonizing its assembly or promoting its dissassembly. Cleaves and inhibits host IFIH1/MDA5, thereby inhibiting the type-I IFN production and the establishment of the antiviral state. Cleaves and inhibits host MAVS, thereby inhibiting the type-I IFN production and the establishment of the antiviral state. Functionally, plays an essential role in the virus replication cycle by acting as a viroporin. Creates a pore in the host endoplasmic reticulum and as a consequence releases Ca2+ in the cytoplasm of infected cell. In turn, high levels of cytoplasmic calcium may trigger membrane trafficking and transport of viral ER-associated proteins to viroplasms, sites of viral genome replication. Induces and associates with structural rearrangements of intracellular membranes. Displays RNA-binding, nucleotide binding and NTPase activities. May play a role in virion morphogenesis and viral RNA encapsidation by interacting with the capsid protein VP3. Its function is as follows. Localizes the viral replication complex to the surface of membranous vesicles. Together with protein 3CD binds the Cis-Active RNA Element (CRE) which is involved in RNA synthesis initiation. Acts as a cofactor to stimulate the activity of 3D polymerase, maybe through a nucleid acid chaperone activity. In terms of biological role, localizes the viral replication complex to the surface of membranous vesicles. It inhibits host cell endoplasmic reticulum-to-Golgi apparatus transport and causes the disassembly of the Golgi complex, possibly through GBF1 interaction. This would result in depletion of MHC, trail receptors and IFN receptors at the host cell surface. Plays an essential role in viral RNA replication by recruiting ACBD3 and PI4KB at the viral replication sites, thereby allowing the formation of the rearranged membranous structures where viral replication takes place. Functionally, acts as a primer for viral RNA replication and remains covalently bound to viral genomic RNA. VPg is uridylylated prior to priming replication into VPg-pUpU. The oriI viral genomic sequence may act as a template for this. The VPg-pUpU is then used as primer on the genomic RNA poly(A) by the RNA-dependent RNA polymerase to replicate the viral genome. During genome replication, the VPg-RNA linkage is removed by the host TDP2, thereby accelerating replication. During the late stage of the replication cycle, host TDP2 is excluded from sites of viral RNA synthesis and encapsidation, allowing for the generation of progeny virions. Involved in the viral replication complex and viral polypeptide maturation. It exhibits protease activity with a specificity and catalytic efficiency that is different from protease 3C. Protein 3CD lacks polymerase activity. Protein 3CD binds to the 5'UTR of the viral genome. Its function is as follows. Major viral protease that mediates proteolytic processing of the polyprotein. Cleaves host EIF5B, contributing to host translation shutoff. Also cleaves host PABPC1, contributing to host translation shutoff. Cleaves host RIGI and thus contributes to the inhibition of type I interferon production. Cleaves host NLRP1, triggers host N-glycine-mediated degradation of the autoinhibitory NLRP1 N-terminal fragment. Inhibits the integrated stress response (ISR) in the infected cell by cleaving host G3BP1. Stress granule formation is thus inhibited, which allows protein synthesis and viral replication. In terms of biological role, replicates the viral genomic RNA on the surface of intracellular membranes. May form linear arrays of subunits that propagate along a strong head-to-tail interaction called interface-I. Covalently attaches UMP to a tyrosine of VPg, which is used to prime RNA synthesis. The positive stranded RNA genome is first replicated at virus induced membranous vesicles, creating a dsRNA genomic replication form. This dsRNA is then used as template to synthesize positive stranded RNA genomes. ss(+)RNA genomes are either translated, replicated or encapsidated. The chain is Genome polyprotein from Poliovirus type 3 (strains P3/Leon/37 and P3/Leon 12A[1]B).